The sequence spans 384 residues: N-acetylneuraminate epimerase (384 aa).

The N-terminal stretch at 1–24 (MNMKTLLTYATLLSVTAFSHVVYA) is a signal peptide. 7 Kelch repeats span residues 46-90 (KVYV…SVIG), 92-145 (YIYL…YSPD), 147-184 (RQIL…RIVD), 185-230 (DYMG…VIEG), 233-281 (VTLI…VAGA), 303-352 (QAFE…TTSE), and 354-383 (VLIV…VEVI). The Proton acceptor role is filled by E239.

The protein belongs to the NanM family. Homodimer.

It is found in the periplasm. It catalyses the reaction N-acetyl-alpha-neuraminate = N-acetyl-beta-neuraminate. In terms of biological role, converts alpha-N-acetylneuranimic acid (Neu5Ac) to the beta-anomer, accelerating the equilibrium between the alpha- and beta-anomers. Probably facilitates sialidase-negative bacteria to compete successfully for limited amounts of extracellular Neu5Ac, which is likely taken up in the beta-anomer. In addition, the rapid removal of sialic acid from solution might be advantageous to the bacterium to damp down host responses. This chain is N-acetylneuraminate epimerase, found in Vibrio cholerae serotype O1 (strain ATCC 39315 / El Tor Inaba N16961).